The following is a 531-amino-acid chain: UDP-glucuronosyltransferase 1A6 (531 aa).

The first 26 residues, 1 to 26 (MACLLPAAQTLPAGFLFLVLWASVLG), serve as a signal peptide directing secretion. 2 N-linked (GlcNAc...) asparagine glycosylation sites follow: N293 and N431. Residues 489–505 (VIGFLLAIVLTVVFIVF) form a helical membrane-spanning segment.

The protein belongs to the UDP-glycosyltransferase family. In terms of tissue distribution, expressed in liver, kidney and at very low levels in colon.

Its subcellular location is the microsome. The protein localises to the endoplasmic reticulum membrane. It carries out the reaction glucuronate acceptor + UDP-alpha-D-glucuronate = acceptor beta-D-glucuronoside + UDP + H(+). It catalyses the reaction (5Z,8Z,11Z,14Z)-eicosatetraenoate + UDP-alpha-D-glucuronate = O-[(5Z),(8Z),(11Z),(14Z)-eicosatetraenoyl]-beta-D-glucuronate + UDP. The enzyme catalyses 15-hydroxy-(5Z,8Z,11Z,13E)-eicosatetraenoate + UDP-alpha-D-glucuronate = 15-O-(beta-D-glucuronosyl)-(5Z,8Z,11Z,14Z)-eicosatetraenoate + UDP + H(+). The catalysed reaction is (E)-ferulate + UDP-alpha-D-glucuronate = (E)-4-O-(beta-D-glucuronosyl)-ferulate + UDP + H(+). It carries out the reaction (E)-ferulate + UDP-alpha-D-glucuronate = (E)-ferulic acid beta-D-glucuronate ester + UDP. Its function is as follows. UDP-glucuronosyltransferase (UGT) that catalyzes phase II biotransformation reactions in which lipophilic substrates are conjugated with glucuronic acid to facilitate their inactivation and excretion from the body. Essential for the elimination and detoxification of drugs, xenobiotics and endogenous compounds. Involved in the glucuronidation of arachidonic acid (AA) and AA-derived eicosanoids including 15-HETE and 20-HETE. Conjugates small planar phenolic molecules such as 4-nitrophenol, 1-naphthol, and 4-methylumbelliferone. The bulky phenol 4-hydroxybiphenyl, androgens and estrogens are not substrates. 2-hydroxybiphenyl is an excellent substrate. Involved in the glucuronidation of the phytochemical ferulic acid at the phenolic or the carboxylic acid group. In Mus musculus (Mouse), this protein is UDP-glucuronosyltransferase 1A6.